The primary structure comprises 396 residues: Acetate kinase (396 aa).

Position 7 (Asn-7) interacts with Mg(2+). Residue Lys-14 participates in ATP binding. Position 91 (Arg-91) interacts with substrate. The active-site Proton donor/acceptor is the Asp-148. ATP-binding positions include 208-212 (HLGNG), 283-285 (DFR), and 331-335 (GLGEN). Glu-384 contacts Mg(2+).

The protein belongs to the acetokinase family. Homodimer. Requires Mg(2+) as cofactor. Mn(2+) serves as cofactor.

Its subcellular location is the cytoplasm. It carries out the reaction acetate + ATP = acetyl phosphate + ADP. It functions in the pathway metabolic intermediate biosynthesis; acetyl-CoA biosynthesis; acetyl-CoA from acetate: step 1/2. Functionally, catalyzes the formation of acetyl phosphate from acetate and ATP. Can also catalyze the reverse reaction. This Alkaliphilus metalliredigens (strain QYMF) protein is Acetate kinase.